The following is a 41-amino-acid chain: uncharacterized protein (41 aa).

Residues 19–41 (NSTRNSSSSSRSSYSSRTTVFSL) form a disordered region.

This is an uncharacterized protein from Dictyostelium discoideum (Social amoeba).